The chain runs to 419 residues: L-rhamnose isomerase (419 aa).

Mn(2+) is bound by residues His262, Asp294, and Asp296.

The protein belongs to the rhamnose isomerase family. Homotetramer. Requires Mn(2+) as cofactor.

Its subcellular location is the cytoplasm. The enzyme catalyses L-rhamnopyranose = L-rhamnulose. The protein operates within carbohydrate degradation; L-rhamnose degradation; glycerone phosphate from L-rhamnose: step 1/3. Catalyzes the interconversion of L-rhamnose and L-rhamnulose. This Salmonella typhimurium (strain LT2 / SGSC1412 / ATCC 700720) protein is L-rhamnose isomerase.